The sequence spans 380 residues: Putative heat stress transcription factor B-4a (380 aa).

The segment at 216–245 is hydrophobic repeat HR-A/B; the sequence is LLRGNAALVQELAHMRKLYSDIIYFVQNHV. Disordered regions lie at residues 268-296 and 314-380; these read PAGGKAPASEVRGASGRSATSSSSLTVAE and INEV…VSPP. Positions 278–296 are enriched in low complexity; it reads VRGASGRSATSSSSLTVAE. Residues 346 to 348 carry the Nuclear localization signal motif; it reads RKR.

This sequence belongs to the HSF family. Class B subfamily. As to quaternary structure, homotrimer. In terms of processing, exhibits temperature-dependent phosphorylation.

The protein resides in the nucleus. In terms of biological role, transcriptional regulator that specifically binds DNA of heat shock promoter elements (HSE). The sequence is that of Putative heat stress transcription factor B-4a (HSFB4A) from Oryza sativa subsp. japonica (Rice).